A 432-amino-acid chain; its full sequence is Enolase (432 aa).

Residue glutamine 163 participates in (2R)-2-phosphoglycerate binding. Glutamate 205 serves as the catalytic Proton donor. Mg(2+) is bound by residues aspartate 242, glutamate 289, and aspartate 316. (2R)-2-phosphoglycerate-binding residues include lysine 341, arginine 370, serine 371, and lysine 392. Catalysis depends on lysine 341, which acts as the Proton acceptor.

Belongs to the enolase family. The cofactor is Mg(2+). Probably phosphorylated.

Its subcellular location is the cytoplasm. It is found in the secreted. The protein resides in the cell surface. It carries out the reaction (2R)-2-phosphoglycerate = phosphoenolpyruvate + H2O. It participates in carbohydrate degradation; glycolysis; pyruvate from D-glyceraldehyde 3-phosphate: step 4/5. Its function is as follows. Catalyzes the reversible conversion of 2-phosphoglycerate (2-PG) into phosphoenolpyruvate (PEP). It is essential for the degradation of carbohydrates via glycolysis. In terms of biological role, 'Moonlights' as a plasminogen receptor. Binds plasminogen and human salivary mucin MG2 when expressed on the bacterial cell surface, potentially allowing the bacterium to acquire surface-associated proteolytic activity that may help the dissemination through oral tissues and entrance into the blood stream. This is Enolase from Streptococcus mutans serotype c (strain ATCC 700610 / UA159).